Consider the following 262-residue polypeptide: Proenkephalin-A-A (262 aa).

The first 24 residues, 1–24 (MGLEARHCCMFLLVFASLSVEIRA), serve as a signal peptide directing secretion. 3 disulfides stabilise this stretch: Cys-26–Cys-48, Cys-30–Cys-52, and Cys-33–Cys-65. 5 propeptides span residues 110 to 131 (MDEL…LAKN), 139 to 177 (EYDS…GEIN), 190 to 201 (STDLEDETSGIQ), 211 to 221 (VGRPEWWEDYQ), and 229 to 253 (TRFT…PDME).

It belongs to the opioid neuropeptide precursor family. Post-translationally, the N-terminal domain contains 6 conserved cysteines thought to be involved in disulfide bonding and/or processing.

It localises to the secreted. In terms of biological role, enkephalin neuropeptides compete with and mimic the effects of opiate drugs. They play a role in a number of physiologic functions, including pain perception and responses to stress. The polypeptide is Proenkephalin-A-A (penk-a) (Xenopus laevis (African clawed frog)).